A 388-amino-acid chain; its full sequence is Na(+)/H(+) antiporter NhaA (388 aa).

At 1-11 the chain is on the cytoplasmic side; that stretch reads MKHLHRFFSSD. Residues 12–31 traverse the membrane as a helical segment; that stretch reads ASGGIILIIAAVLAMIMANS. Residues 32-58 are Periplasmic-facing; that stretch reads GATSGWYHDFLETPVQLRVGTLEINKN. Residues 59-80 traverse the membrane as a helical segment; that stretch reads MLLWINDALMAVFFLLVGLEVK. The Cytoplasmic segment spans residues 81–96; that stretch reads RELMQGSLASLRQAAF. A helical transmembrane segment spans residues 97–116; sequence PVIAAIGGMIVPALLYLAFN. The Periplasmic segment spans residues 117 to 122; sequence YADPIT. The chain crosses the membrane as a helical span at residues 123-130; that stretch reads REGWAIPA. Over 131 to 154 the chain is Cytoplasmic; the sequence is ATDIAFALGVLALLGSRVPLALKI. A helical membrane pass occupies residues 155–176; that stretch reads FLMALAIIDDLGAIIIIALFYT. Residues 177–180 are Periplasmic-facing; the sequence is NDLS. A helical transmembrane segment spans residues 181–200; that stretch reads MASLGVAAVAIAVLVVLNLC. At 201 to 204 the chain is on the cytoplasmic side; sequence GVRR. A helical membrane pass occupies residues 205-222; it reads TGVYILVGVVLWTAVLKS. A topological domain (periplasmic) is located at residue Gly223. Residues 224–236 traverse the membrane as a helical segment; that stretch reads VHATLAGVIVGFF. At 237–253 the chain is on the cytoplasmic side; it reads IPLKEKHGRSPAKRLEH. Residues 254 to 272 traverse the membrane as a helical segment; the sequence is VLHPWVAYLILPLFAFANA. At 273–286 the chain is on the periplasmic side; that stretch reads GVSLQGVTLEGLTS. A helical transmembrane segment spans residues 287–310; that stretch reads ILPLGIIAGLLIGKPLGISLFCWL. Over 311 to 339 the chain is Cytoplasmic; that stretch reads ALRLKLAHLPEGTTYQQIMAVGILCGIGF. The chain crosses the membrane as a helical span at residues 340–350; that stretch reads TMSIFIASLAF. Residues 351-357 are Periplasmic-facing; the sequence is GSVDPEL. A helical membrane pass occupies residues 358-380; sequence INWAKLGILVGSISSAVIGYSWL. At 381-388 the chain is on the cytoplasmic side; sequence RVRLRPSV.

This sequence belongs to the NhaA Na(+)/H(+) (TC 2.A.33) antiporter family.

It localises to the cell inner membrane. It catalyses the reaction Na(+)(in) + 2 H(+)(out) = Na(+)(out) + 2 H(+)(in). Na(+)/H(+) antiporter that extrudes sodium in exchange for external protons. In Escherichia coli O1:K1 / APEC, this protein is Na(+)/H(+) antiporter NhaA.